The sequence spans 132 residues: MSMQDPIADMFTRIRNGLSAEKEFVSVPFSKIKMEIANFLVNEGYIKSCSKGTTSMGHPSIEIELKYHAGVPVIEMIKRVSRPSLRIYKSHADLPKVYGGYGVAIVSTSKGLVSDRKARDLGVGGEIIGYVA.

Belongs to the universal ribosomal protein uS8 family. Part of the 30S ribosomal subunit. Contacts proteins S5 and S12.

Its function is as follows. One of the primary rRNA binding proteins, it binds directly to 16S rRNA central domain where it helps coordinate assembly of the platform of the 30S subunit. The protein is Small ribosomal subunit protein uS8 of Francisella tularensis subsp. novicida (strain U112).